Here is a 228-residue protein sequence, read N- to C-terminus: Calcyclin-binding protein (228 aa).

N-acetylalanine is present on Ala-2. Residues 2–80 (ASEELQKDLE…YTVKISNYGW (79 aa)) form an interaction with SIAH1 region. Ser-3 is modified (phosphoserine). N6-acetyllysine occurs at positions 8 and 19. A Phosphoserine modification is found at Ser-34. One can recognise a CS domain in the interval 73 to 167 (VKISNYGWDQ…VENTRWDYLT (95 aa)). Positions 73–228 (VKISNYGWDQ…EKQAKGDTEF (156 aa)) are interaction with SKP1. An N6-acetyllysine mark is found at Lys-85 and Lys-118. An interaction with S100A6 region spans residues 154–228 (CRKKVENTRW…EKQAKGDTEF (75 aa)). One can recognise an SGS domain in the interval 168-228 (QVEKERKEKE…EKQAKGDTEF (61 aa)).

In terms of assembly, interacts with protein of the S100 family S100A1, S100A6, S100B, S100P and S100A12 in a calcium-dependent manner. Component of some large E3 complex at least composed of UBE2D1, SIAH1, CACYBP/SIP, SKP1, APC and TBL1X. Interacts directly with SIAH1, SIAH2 and SKP1. Phosphorylated on serine residues. Phosphorylated upon induction by RA or at high calcium concentrations.

It is found in the cytoplasm. The protein localises to the nucleus. Its function is as follows. May be involved in calcium-dependent ubiquitination and subsequent proteasomal degradation of target proteins. Probably serves as a molecular bridge in ubiquitin E3 complexes. Participates in the ubiquitin-mediated degradation of beta-catenin (CTNNB1). This chain is Calcyclin-binding protein (CACYBP), found in Pongo abelii (Sumatran orangutan).